Consider the following 268-residue polypeptide: Calpain small subunit 1 (268 aa).

M1 carries the N-acetylmethionine modification. Position 6 is a phosphoserine (S6). The 35-residue stretch at 91–125 folds into the EF-hand 1; atypical domain; sequence EANESEEVRQFRRLFAQLAGDDMEVSATELMNILN. 10 residues coordinate Ca(2+): A109, D112, E114, E119, D137, D152, D154, T156, K158, and E163. EF-hand domains lie at 139-172, 169-204, 205-233, and 234-268; these read FGIDTCRSMVAVMDSDTTGKLGFEEFKYLWNNIK, NNIKRWQAIYKQFDTDRSGTICSSELPGAFEAAGFH, LNEHLYNMIIRRYSDESGNMDFDNFISCL, and VRLDAMFRAFKSLDKDGTGQIQVNIQEWLQLTMYS. K179 is modified (N6-acetyllysine). Ca(2+) is bound by residues D182, D184, S186, T188, E193, and D225.

Homodimer or heterodimer of a large (catalytic) and a small (regulatory) subunit. In presence of calcium, the heterodimer dissociates.

Its subcellular location is the cytoplasm. It localises to the cell membrane. Regulatory subunit of the calcium-regulated non-lysosomal thiol-protease which catalyzes limited proteolysis of substrates involved in cytoskeletal remodeling and signal transduction. Essential for embryonic development. In Homo sapiens (Human), this protein is Calpain small subunit 1 (CAPNS1).